The primary structure comprises 95 residues: RING finger protein Z (95 aa).

The span at methionine 1–leucine 17 shows a compositional bias: polar residues. A disordered region spans residues methionine 1–glutamate 25. Residue glycine 2 is the site of N-myristoyl glycine; by host attachment. Residues cysteine 40–cysteine 76 form an RING-type; atypical zinc finger. An ASAP motif motif is present at residues alanine 90 to proline 93.

This sequence belongs to the arenaviridae Z protein family. As to quaternary structure, interacts with protein NP; this interaction probably directs the encapsidated genome to budding sites. Interacts (via RING domain) with polymerase L; this interaction inhibits viral transcription and replication, Z partially blocks the product exit tunnel for the releasing nascent RNA product. Interacts with the glycoprotein complex; this interaction plays a role in virion budding. Interacts with host eIF4E; this interaction results in eIF4E reduced affinity for its substrate, the 5'-m7 G cap structure. Interacts (via late-budding domain) with host TSG101; this interaction is essential for budding and release of viral particles. Interacts with host RPLP0; this interaction may serve to load ribosome-like particles inside the virion. Interacts with host PML; this interaction induces PML bodies redistribution in the cytoplasm upon viral infection. In terms of processing, myristoylation is required for the role of RING finger protein Z in assembly and budding.

Its subcellular location is the virion. It is found in the host cytoplasm. The protein localises to the host perinuclear region. The protein resides in the host cell membrane. In terms of biological role, plays a crucial role in virion assembly and budding. Expressed late in the virus life cycle, it acts as an inhibitor of viral transcription and RNA synthesis by interacting with the viral polymerase L. Presumably recruits the NP encapsidated genome to cellular membranes at budding sites via direct interaction with NP. Plays critical roles in the final steps of viral release by interacting with host TSG101, a member of the vacuolar protein-sorting pathway and using other cellular host proteins involved in vesicle formation pathway. The budding of the virus progeny occurs after association of protein Z with the viral glycoprotein complex SSP-GP1-GP2 at the cell periphery, step that requires myristoylation of protein Z. Also selectively represses protein production by associating with host eIF4E. In cell-based minigenome assay, has an inhibitory effect on the ribonucleoprotein machinery (vRNP), which is responsible for the replication and transcription of the viral genome. The polypeptide is RING finger protein Z (Tacaribe virus (strain Franze-Fernandez) (TCRV)).